The following is a 325-amino-acid chain: Glutarate 2-hydroxylase (325 aa).

Residues His160, Asp162, and His292 each coordinate Fe cation.

This sequence belongs to the glutarate hydroxylase family. Homotetramer. Fe(2+) is required as a cofactor.

It catalyses the reaction glutarate + 2-oxoglutarate + O2 = (S)-2-hydroxyglutarate + succinate + CO2. The protein operates within amino-acid degradation. Its function is as follows. Acts as an alpha-ketoglutarate-dependent dioxygenase catalyzing hydroxylation of glutarate (GA) to L-2-hydroxyglutarate (L2HG). Functions in a L-lysine degradation pathway that proceeds via cadaverine, glutarate and L-2-hydroxyglutarate. This Citrobacter koseri (strain ATCC BAA-895 / CDC 4225-83 / SGSC4696) protein is Glutarate 2-hydroxylase.